A 376-amino-acid chain; its full sequence is MKVLLFCIVISLTTLIASGQDIEEELRCPGGYCVSKYLCPNGTFIDDIKHAQTTQLIGLRAGLDIDDFDDCNDYLLVCCQSAPAPTATSTEKPATSDELIEPPPSTNLACGQANEGGLIYDLRNNETLSQYAEYPWVVYILALKKQEANSGDFVCGGTLIHSRLVVTTAHNTDGKTDLVARFGEWDISTTKEPFPQQDIDVAEVIKHPQYVFNPIQNDIALLVLAENVQYAAHIRPICLPQPTDEFVGQRCVSNGWGKERGVYANVMKKLTLPVIGRANCTRMLRYAGLGPFYTLREGFLCAGGEVAVDMCKGDGGSPLACQTESGTYVLAGIVSWGIGCGGFNTPGVYVAVNRYVQWLNEHIVDQALNESFDIKL.

Positions 1 to 19 are cleaved as a signal peptide; that stretch reads MKVLLFCIVISLTTLIASG. The Clip domain maps to 24-80; the sequence is EELRCPGGYCVSKYLCPNGTFIDDIKHAQTTQLIGLRAGLDIDDFDDCNDYLLVCCQ. Disulfide bonds link C28-C78, C33-C71, and C39-C79. N-linked (GlcNAc...) asparagine glycosylation is present at N41. The interval 85–106 is disordered; sequence PTATSTEKPATSDELIEPPPST. The region spanning 114–364 is the Peptidase S1 domain; that stretch reads NEGGLIYDLR…YVQWLNEHIV (251 aa). Residues N125 and N279 are each glycosylated (N-linked (GlcNAc...) asparagine). Disulfide bonds link C251–C321, C280–C301, and C311–C340. N369 carries N-linked (GlcNAc...) asparagine glycosylation.

It belongs to the peptidase S1 family. CLIP subfamily. In terms of assembly, may form a heterodimer of a light chain and a heavy chain; disulfide-linked. In terms of processing, secreted as a full-length protein. Proteolytically cleaved into two chains which probably remain covalently linked. Cleavage is induced by fungus B.bassiana and Gram-positive or Gram-negative bacteria infection.

Its subcellular location is the secreted. In terms of biological role, inactive serine protease which plays an essential role in the innate immune response against bacteria, fungi and protozoa infection by activating the melanization cascade. In the melanization cascade, acts downstream of TEP1, SPCLIP1 and CLIPA8 to promote CLIPC9 proteolytic cleavage. In the susceptible strain G3, appears to be dispensable for parasite P.berghei ookinete elimination which occurs by lysis. Required for the melanization of Gram-positive and Gram-negative bacteria. Required for the melanization of fungus B.bassiana. This chain is Inactive CLIP domain-containing serine protease A28, found in Anopheles gambiae (African malaria mosquito).